The following is a 372-amino-acid chain: 3-dehydroquinate synthase (372 aa).

Residues 116–120, 140–141, Lys153, Lys162, and 180–183 each bind NAD(+); these read GVVGD, TT, and TLKT. Positions 195, 260, and 277 each coordinate Zn(2+).

It belongs to the sugar phosphate cyclases superfamily. Dehydroquinate synthase family. The cofactor is NAD(+). Co(2+) serves as cofactor. Zn(2+) is required as a cofactor.

The protein localises to the cytoplasm. The catalysed reaction is 7-phospho-2-dehydro-3-deoxy-D-arabino-heptonate = 3-dehydroquinate + phosphate. Its pathway is metabolic intermediate biosynthesis; chorismate biosynthesis; chorismate from D-erythrose 4-phosphate and phosphoenolpyruvate: step 2/7. Its function is as follows. Catalyzes the conversion of 3-deoxy-D-arabino-heptulosonate 7-phosphate (DAHP) to dehydroquinate (DHQ). This is 3-dehydroquinate synthase from Prochlorococcus marinus (strain MIT 9313).